A 549-amino-acid polypeptide reads, in one-letter code: MCRIRTFRLRRKRRVSGRSFCRSRIDPGYVRERPYIGGRSRPTTFHLTRKKKAPLGGDLSPSFARSPVLEPSSPPQALSVPSLSSEKKTASPTCVKHHLSGGAVRRANTVVPRTKKRTSRHHTLMSTTCRCWSSSIVLYEHLDARVSDVGKTSRRRRCSLGGTLSGSIISIVAKRDCDYDEPHHLFFMLLLYKRLMSTTLGISHLVKHARFSSLQGTLGSLKGTVYRPKQKTHTCNRSTTSNDTKTQSYNALFMERTWNKKTIAARAKPKPSGEAGASFPTQSLGSLSSFFFPDSLKNHRHSPMTRNQLLEHKRSQQVETNKLDDAITLYCVYIDRCEFVGKKRRCMMHNDRETGDCSSLPNANTQTHRFPSPHKEMRPPPTNEADSCSSYDGALARRASSPLREGTSGSSAHRPKQQCLLHCHQSISCILFPPNSSPQHQFALLRKVVATAAAATGRSSSPRPQTLYMCRKCVNTCYCPMRLVHRYMFQNLLIHLRAHRLGVSSSSNWPTFSTTVVNPCTTTPIKTTSSSSPRPRNDTRSPPILGMCF.

Disordered regions lie at residues lysine 50–proline 92, glutamate 353–tyrosine 391, and threonine 523–proline 542. Polar residues-rich tracts occupy residues proline 75 to serine 84 and aspartate 356 to arginine 369. Residues threonine 523–arginine 534 show a composition bias toward low complexity.

In terms of biological role, this viral structural protein may have important functions, such as protein kinase activity, DNA binding, and possible transcriptional activation of immediate-early genes. The sequence is that of Tegument protein from Homo sapiens (Human).